Reading from the N-terminus, the 251-residue chain is Flap endonuclease Xni (251 aa).

A Mg(2+)-binding site is contributed by D104. The 5'-3' exonuclease domain maps to 160 to 248; the sequence is VSPQQLSDYW…ALTGNLQQLR (89 aa). Residues L171, A172, P180, V182, and I185 each coordinate K(+). The segment at 184–189 is interaction with DNA; sequence GIGPKT.

It belongs to the Xni family. Requires Mg(2+) as cofactor. It depends on K(+) as a cofactor.

Has flap endonuclease activity. During DNA replication, flap endonucleases cleave the 5'-overhanging flap structure that is generated by displacement synthesis when DNA polymerase encounters the 5'-end of a downstream Okazaki fragment. This is Flap endonuclease Xni from Serratia proteamaculans (strain 568).